The chain runs to 147 residues: Ribosomal RNA large subunit methyltransferase H (147 aa).

Residues Leu64, Gly96, and 115 to 120 contribute to the S-adenosyl-L-methionine site; that span reads FSKMTF.

Belongs to the RNA methyltransferase RlmH family. As to quaternary structure, homodimer.

Its subcellular location is the cytoplasm. The catalysed reaction is pseudouridine(1915) in 23S rRNA + S-adenosyl-L-methionine = N(3)-methylpseudouridine(1915) in 23S rRNA + S-adenosyl-L-homocysteine + H(+). Specifically methylates the pseudouridine at position 1915 (m3Psi1915) in 23S rRNA. The protein is Ribosomal RNA large subunit methyltransferase H of Acholeplasma laidlawii (strain PG-8A).